A 62-amino-acid polypeptide reads, in one-letter code: Large ribosomal subunit protein bL28 (62 aa).

The interval 1–22 (MGKQCFVTGRKASTGNRRSHAL) is disordered.

Belongs to the bacterial ribosomal protein bL28 family.

This is Large ribosomal subunit protein bL28 from Staphylococcus aureus (strain N315).